Reading from the N-terminus, the 102-residue chain is Co-chaperonin GroES (102 aa).

The protein belongs to the GroES chaperonin family. In terms of assembly, heptamer of 7 subunits arranged in a ring. Interacts with the chaperonin GroEL.

The protein localises to the cytoplasm. Together with the chaperonin GroEL, plays an essential role in assisting protein folding. The GroEL-GroES system forms a nano-cage that allows encapsulation of the non-native substrate proteins and provides a physical environment optimized to promote and accelerate protein folding. GroES binds to the apical surface of the GroEL ring, thereby capping the opening of the GroEL channel. This is Co-chaperonin GroES from Chlamydia felis (strain Fe/C-56) (Chlamydophila felis).